A 968-amino-acid polypeptide reads, in one-letter code: Alanine--tRNA ligase, cytoplasmic (968 aa).

ATP-binding positions include R77, H95, W176, and 214-216; that span reads IWN. L-alanine is bound by residues N216 and D239. G243 is an ATP binding site. Zn(2+) is bound by residues H606, H610, C724, and H728.

It belongs to the class-II aminoacyl-tRNA synthetase family. Monomer. Zn(2+) is required as a cofactor.

It is found in the cytoplasm. The catalysed reaction is tRNA(Ala) + L-alanine + ATP = L-alanyl-tRNA(Ala) + AMP + diphosphate. Its function is as follows. Catalyzes the attachment of alanine to tRNA(Ala) in a two-step reaction: alanine is first activated by ATP to form Ala-AMP and then transferred to the acceptor end of tRNA(Ala). Also edits incorrectly charged tRNA(Ala) via its editing domain. This chain is Alanine--tRNA ligase, cytoplasmic, found in Caenorhabditis elegans.